Here is a 371-residue protein sequence, read N- to C-terminus: Glutamate 5-kinase (371 aa).

Lys-11 is a binding site for ATP. Residues Ser-52, Asp-139, and Asn-151 each coordinate substrate. Residues 171–172 and 213–219 contribute to the ATP site; these read TD and TGGMATK. Positions 278–356 constitute a PUA domain; the sequence is EGSLTLDEGA…AEIPRILGYE (79 aa).

This sequence belongs to the glutamate 5-kinase family.

It localises to the cytoplasm. The enzyme catalyses L-glutamate + ATP = L-glutamyl 5-phosphate + ADP. It functions in the pathway amino-acid biosynthesis; L-proline biosynthesis; L-glutamate 5-semialdehyde from L-glutamate: step 1/2. Its function is as follows. Catalyzes the transfer of a phosphate group to glutamate to form L-glutamate 5-phosphate. The chain is Glutamate 5-kinase from Synechococcus sp. (strain JA-2-3B'a(2-13)) (Cyanobacteria bacterium Yellowstone B-Prime).